Consider the following 318-residue polypeptide: Ubiquitin-like domain-containing CTD phosphatase 1 (318 aa).

The Ubiquitin-like domain maps to 3-81; the sequence is LSLIIKWGGQ…IMMMGTREES (79 aa). One can recognise an FCP1 homology domain in the interval 133–294; it reads PREGKKLLVL…LKLTQYLKEI (162 aa). The Mg(2+) site is built by D143, D145, and D253.

Requires Mg(2+) as cofactor.

Its subcellular location is the nucleus. The enzyme catalyses O-phospho-L-seryl-[protein] + H2O = L-seryl-[protein] + phosphate. It carries out the reaction O-phospho-L-threonyl-[protein] + H2O = L-threonyl-[protein] + phosphate. Functionally, dephosphorylates 26S nuclear proteasomes, thereby decreasing their proteolytic activity. Recruited to the 19S regulatory particle of the 26S proteasome where it dephosphorylates 19S component PSMC2 which impairs PSMC2 ATPase activity and disrupts 26S proteasome assembly. Has also been reported to stimulate the proteolytic activity of the 26S proteasome. This chain is Ubiquitin-like domain-containing CTD phosphatase 1 (UBLCP1), found in Gallus gallus (Chicken).